The chain runs to 297 residues: MKDEFGREIRSFRLSITPECNLKCFYCHREGRTEENGKLMSPDEIGKIVSASLEFGVRKIKISGGEPLVRKDLPKIIQNIKNDQIKDISLTTNGILLEKCAEDLKKAGLNRVNVSLDTLNPKKYKEITGGDVEKVKRGIEKAIFLGLTPLKVNFLAMDITLNDLSEVMDYCKKVGAILQIIEFIPVDPNLKHHHIDITPIEEEIAKKSEKVVTRKFMQNRKKYILDGLEIEFVRPMDNTEFCGHCTRIRLTYDGFLKPCLLRDDNLVDVVTPLRNEESIRSYFIKCIKNREPFCKAE.

The 217-residue stretch at 4-220 (EFGREIRSFR…VVTRKFMQNR (217 aa)) folds into the Radical SAM core domain. A GTP-binding site is contributed by R13. [4Fe-4S] cluster is bound by residues C20 and C24. Y26 provides a ligand contact to S-adenosyl-L-methionine. C27 lines the [4Fe-4S] cluster pocket. K61 serves as a coordination point for GTP. G65 provides a ligand contact to S-adenosyl-L-methionine. GTP is bound at residue T91. S115 provides a ligand contact to S-adenosyl-L-methionine. K151 contacts GTP. [4Fe-4S] cluster is bound by residues C242 and C245. 247 to 249 (RIR) contacts GTP. A [4Fe-4S] cluster-binding site is contributed by C259.

Belongs to the radical SAM superfamily. MoaA family. Requires [4Fe-4S] cluster as cofactor.

It carries out the reaction GTP + AH2 + S-adenosyl-L-methionine = (8S)-3',8-cyclo-7,8-dihydroguanosine 5'-triphosphate + 5'-deoxyadenosine + L-methionine + A + H(+). Its pathway is cofactor biosynthesis; molybdopterin biosynthesis. Functionally, catalyzes the cyclization of GTP to (8S)-3',8-cyclo-7,8-dihydroguanosine 5'-triphosphate. The protein is Probable GTP 3',8-cyclase of Methanococcus vannielii (strain ATCC 35089 / DSM 1224 / JCM 13029 / OCM 148 / SB).